We begin with the raw amino-acid sequence, 212 residues long: Nucleoredoxin-like protein 1 (212 aa).

The region spanning 1–164 (MASLFSGRIL…AAEVLDRNFQ (164 aa)) is the Thioredoxin domain. The interval 191 to 212 (AARGGRDPGGGGGEEGGAGGLF) is disordered. Over residues 197–212 (DPGGGGGEEGGAGGLF) the composition is skewed to gly residues.

This sequence belongs to the nucleoredoxin family. In terms of assembly, interacts with isoform 1 of BSG.

It localises to the cell projection. It is found in the cilium. Its subcellular location is the photoreceptor outer segment. Its function is as follows. Plays an important role in retinal cone photoreceptor survival. In association with glucose transporter SLC16A1/GLUT1 and BSG, promotes retinal cone survival by enhancing aerobic glycolysis and accelerating the entry of glucose into photoreceptors. May play a role in cone cell viability, slowing down cone degeneration, does not seem to play a role in degenerating rods. This Homo sapiens (Human) protein is Nucleoredoxin-like protein 1 (NXNL1).